Consider the following 160-residue polypeptide: SsrA-binding protein (160 aa).

The segment at 131 to 160 (KKEYDKRHTERERDSDRELQRAVRTKGKDD) is disordered.

This sequence belongs to the SmpB family.

Its subcellular location is the cytoplasm. Its function is as follows. Required for rescue of stalled ribosomes mediated by trans-translation. Binds to transfer-messenger RNA (tmRNA), required for stable association of tmRNA with ribosomes. tmRNA and SmpB together mimic tRNA shape, replacing the anticodon stem-loop with SmpB. tmRNA is encoded by the ssrA gene; the 2 termini fold to resemble tRNA(Ala) and it encodes a 'tag peptide', a short internal open reading frame. During trans-translation Ala-aminoacylated tmRNA acts like a tRNA, entering the A-site of stalled ribosomes, displacing the stalled mRNA. The ribosome then switches to translate the ORF on the tmRNA; the nascent peptide is terminated with the 'tag peptide' encoded by the tmRNA and targeted for degradation. The ribosome is freed to recommence translation, which seems to be the essential function of trans-translation. The protein is SsrA-binding protein of Pseudomonas syringae pv. tomato (strain ATCC BAA-871 / DC3000).